Consider the following 185-residue polypeptide: Protein LURP-one-related 13 (185 aa).

Belongs to the LOR family.

In terms of biological role, might be related to the phospholipid scramblase and tubby-like superfamily of membrane tethered transcription factors. This chain is Protein LURP-one-related 13, found in Arabidopsis thaliana (Mouse-ear cress).